The following is a 572-amino-acid chain: SHUGOSHIN 1 (572 aa).

Residues lysine 59–glutamine 110 are a coiled coil. Disordered stretches follow at residues aspartate 185 to serine 221, lysine 244 to threonine 285, alanine 333 to threonine 352, and serine 484 to phenylalanine 572. A compositionally biased stretch (polar residues) spans serine 192–glutamine 201. Basic and acidic residues-rich tracts occupy residues lysine 244–isoleucine 257, lysine 336–threonine 352, glutamate 523–lysine 542, and alanine 552–phenylalanine 572.

Belongs to the shugoshin family.

Its function is as follows. Protects sister chromatid centromere cohesion in meiosis I but not through the protection of the cohesin SYN1. Required with SGO2 for full protection of centromeric cohesion during anaphase I. Required to prevent precocious release of pericentromeric cohesins during meiosis. Not necessary for the maintenance of the synaptonemal complex (SC). Not required for monopolar spindle orientation in meiosis I. The sequence is that of SHUGOSHIN 1 from Arabidopsis thaliana (Mouse-ear cress).